We begin with the raw amino-acid sequence, 32 residues long: Toxic phospholipase A2 (32 aa).

It belongs to the phospholipase A2 family. Group III subfamily. Ca(2+) serves as cofactor.

The protein resides in the secreted. It localises to the nematocyst. The catalysed reaction is a 1,2-diacyl-sn-glycero-3-phosphocholine + H2O = a 1-acyl-sn-glycero-3-phosphocholine + a fatty acid + H(+). Its function is as follows. PLA2 catalyzes the calcium-dependent hydrolysis of the 2-acyl groups in 3-sn-phosphoglycerides. In Rhopilema nomadica (Mediteranean medusa), this protein is Toxic phospholipase A2.